A 371-amino-acid polypeptide reads, in one-letter code: MASYHLSVKTGGKGSASPHADYIAREGKYAREKDSDLEHKESGNMPAWAAHKPSEFWKAADTSERANGCTYREIEIALPRELKPEQRLELVRDFVQQEIGDRHAYQFAIHNPKAAIAGGEQPHAHIMFSERINDGIHRDPEQYFKRANTKEPDAVAQKRHVSGKHRPNAKNTLLPRGRRWADLQNKHLERYQHADRVDSRSLKAQGIDREPERHLGAGQVQRFDTEQLQAILERREAERQVQQSRDERDSVIDVTTSLREALSERDTLTLKQELKSEPEQESHSGRTFDFEKEPDKLNALVSDAMKDIQEEIDLQSLVNDAMAEFQGIHQEMERQRERERLAEKQRQQEKERQRLAEQIRQKPDKGWSFSR.

Disordered regions lie at residues 1–46 (MASY…GNMP), 150–172 (KEPD…AKNT), 196–221 (RVDS…GQVQ), 263–291 (SERD…FDFE), and 328–371 (IHQE…SFSR). The span at 22–42 (YIAREGKYAREKDSDLEHKES) shows a compositional bias: basic and acidic residues. Residues 157–168 (QKRHVSGKHRPN) are compositionally biased toward basic residues. Over residues 196–215 (RVDSRSLKAQGIDREPERHL) the composition is skewed to basic and acidic residues. The segment covering 330-365 (QEMERQRERERLAEKQRQQEKERQRLAEQIRQKPDK) has biased composition (basic and acidic residues).

It belongs to the MobA/MobL family.

This protein is probably required for relaxation complex formation. This Salmonella typhimurium protein is 43 kDa relaxation protein.